A 216-amino-acid chain; its full sequence is Transmembrane emp24 domain-containing protein eca (216 aa).

A signal peptide spans 1-20 (MRDQFISLALILCVLHSACG). Topologically, residues 21-182 (LYFHISETER…FRHTSESTNS (162 aa)) are lumenal. A GOLD domain is found at 30–126 (RKCFIEEVPD…QLRVHLDIQV (97 aa)). The stretch at 134–164 (ANVAQKEKLTELQLRIRQLLDQVEQITKEQN) forms a coiled coil. A helical transmembrane segment spans residues 183-203 (RVLWWSLAQTVVLVCMGFWQM). Over 204–216 (RHLKSFFEAKKLV) the chain is Cytoplasmic. The short motif at 213–216 (KKLV) is the Prevents secretion from ER element.

The protein belongs to the EMP24/GP25L family.

It is found in the endoplasmic reticulum membrane. In terms of biological role, eca and bai are essential, though not redundant, for dorsoventral patterning of the embryo. Specifically required during early embryogenesis for the activity of maternal tkv, while the zygotic tkv is not affected. Involved in Golgi organization. In Drosophila simulans (Fruit fly), this protein is Transmembrane emp24 domain-containing protein eca.